The sequence spans 124 residues: Ribonuclease pancreatic (124 aa).

Residues 1–13 (KETAAAKFERQHM) are compositionally biased toward basic and acidic residues. The segment at 1 to 22 (KETAAAKFERQHMDSSTSAASS) is disordered. 2 residues coordinate substrate: K7 and R10. H12 serves as the catalytic Proton acceptor. 4 disulfides stabilise this stretch: C26–C84, C40–C95, C58–C110, and C65–C72. Residue N34 is glycosylated (N-linked (GlcNAc...) asparagine). Substrate contacts are provided by residues 41 to 45 (KPVNT), K66, and R85. H119 (proton donor) is an active-site residue.

It belongs to the pancreatic ribonuclease family. As to quaternary structure, monomer. Interacts with and forms tight 1:1 complexes with RNH1. Dimerization of two such complexes may occur. Interaction with RNH1 inhibits this protein. In terms of tissue distribution, pancreas.

The protein localises to the secreted. It carries out the reaction an [RNA] containing cytidine + H2O = an [RNA]-3'-cytidine-3'-phosphate + a 5'-hydroxy-ribonucleotide-3'-[RNA].. The catalysed reaction is an [RNA] containing uridine + H2O = an [RNA]-3'-uridine-3'-phosphate + a 5'-hydroxy-ribonucleotide-3'-[RNA].. In terms of biological role, endonuclease that catalyzes the cleavage of RNA on the 3' side of pyrimidine nucleotides. Acts on single-stranded and double-stranded RNA. In Bison bison (American bison), this protein is Ribonuclease pancreatic (RNASE1).